The sequence spans 642 residues: Phosphomethylpyrimidine synthase (642 aa).

Residues asparagine 235, methionine 264, tyrosine 293, histidine 329, 349 to 351 (SRG), 390 to 393 (DGLR), and glutamate 429 contribute to the substrate site. Histidine 433 is a binding site for Zn(2+). Tyrosine 456 is a binding site for substrate. Histidine 497 is a Zn(2+) binding site. [4Fe-4S] cluster-binding residues include cysteine 577, cysteine 580, and cysteine 585.

This sequence belongs to the ThiC family. In terms of assembly, homodimer. [4Fe-4S] cluster serves as cofactor.

The catalysed reaction is 5-amino-1-(5-phospho-beta-D-ribosyl)imidazole + S-adenosyl-L-methionine = 4-amino-2-methyl-5-(phosphooxymethyl)pyrimidine + CO + 5'-deoxyadenosine + formate + L-methionine + 3 H(+). The protein operates within cofactor biosynthesis; thiamine diphosphate biosynthesis. In terms of biological role, catalyzes the synthesis of the hydroxymethylpyrimidine phosphate (HMP-P) moiety of thiamine from aminoimidazole ribotide (AIR) in a radical S-adenosyl-L-methionine (SAM)-dependent reaction. This is Phosphomethylpyrimidine synthase from Alteromonas mediterranea (strain DSM 17117 / CIP 110805 / LMG 28347 / Deep ecotype).